The sequence spans 279 residues: Type III pantothenate kinase (279 aa).

6 to 13 (DIGNTLSK) contributes to the ATP binding site. Substrate-binding positions include Y92 and 99 to 102 (GVDR). The Proton acceptor role is filled by D101. D120 is a binding site for K(+). Position 123 (S123) interacts with ATP. T177 contributes to the substrate binding site.

The protein belongs to the type III pantothenate kinase family. Homodimer. NH4(+) serves as cofactor. The cofactor is K(+).

The protein resides in the cytoplasm. The enzyme catalyses (R)-pantothenate + ATP = (R)-4'-phosphopantothenate + ADP + H(+). Its pathway is cofactor biosynthesis; coenzyme A biosynthesis; CoA from (R)-pantothenate: step 1/5. Catalyzes the phosphorylation of pantothenate (Pan), the first step in CoA biosynthesis. This is Type III pantothenate kinase from Chromohalobacter salexigens (strain ATCC BAA-138 / DSM 3043 / CIP 106854 / NCIMB 13768 / 1H11).